The primary structure comprises 681 residues: Probable glutamate carboxypeptidase LAMP1 (681 aa).

Over 1-6 (MSKSKS) the chain is Cytoplasmic. A helical; Signal-anchor for type II membrane protein transmembrane segment spans residues 7–24 (LAFVIAALSYSFFSLFSS). Over 25 to 681 (PPKSHYHELF…ASLVLKGELI (657 aa)) the chain is Extracellular. 4 N-linked (GlcNAc...) asparagine glycosylation sites follow: Asn-42, Asn-140, Asn-166, and Asn-299. Residues 241–527 (SVDGCERLSD…SVLGLVALRL (287 aa)) are catalytic. Positions 333 and 343 each coordinate Zn(2+). The active-site Nucleophile is the Glu-380. Residues Glu-381 and Asp-409 each coordinate Zn(2+). N-linked (GlcNAc...) asparagine glycosylation is present at Asn-441. A Zn(2+)-binding site is contributed by His-493. The N-linked (GlcNAc...) asparagine glycan is linked to Asn-536.

This sequence belongs to the peptidase M28 family. M28B subfamily. Requires Zn(2+) as cofactor.

It localises to the endoplasmic reticulum membrane. It catalyses the reaction Release of an unsubstituted, C-terminal glutamyl residue, typically from Ac-Asp-Glu or folylpoly-gamma-glutamates.. Acts in association with AMP1 to suppress ectopic stem cell niche formation in the shoot apical meristem (SAM) independently of cytokinin signaling pathway. This chain is Probable glutamate carboxypeptidase LAMP1, found in Arabidopsis thaliana (Mouse-ear cress).